The following is a 319-amino-acid chain: Sulfate adenylyltransferase subunit 2 (319 aa).

2 disordered regions span residues Met-1–Pro-22 and Arg-296–Phe-319.

It belongs to the PAPS reductase family. CysD subfamily.

It carries out the reaction sulfate + ATP + H(+) = adenosine 5'-phosphosulfate + diphosphate. The protein operates within antibiotic biosynthesis; mitomycin C biosynthesis. With CysN forms the ATP sulfurylase (ATPS) that catalyzes the adenylation of sulfate producing adenosine 5'-phosphosulfate (APS) and diphosphate, the first enzymatic step in sulfur assimilation pathway. APS synthesis involves the formation of a high-energy phosphoric-sulfuric acid anhydride bond driven by GTP hydrolysis by CysN coupled to ATP hydrolysis by CysD. The polypeptide is Sulfate adenylyltransferase subunit 2 (mmcV) (Streptomyces lavendulae).